The primary structure comprises 418 residues: Creatine kinase U-type, mitochondrial (418 aa).

Residues 1–39 (MAGPFSRLLSARPGLKLLALAGAGSLAAGILLRPESVRA) constitute a mitochondrion transit peptide. Positions 40-64 (ATGERRRLYPPSAEYPDLRKHNNCM) are cardiolipin-binding. In terms of domain architecture, Phosphagen kinase N-terminal spans 46–132 (RLYPPSAEYP…FDPVIQERHN (87 aa)). Phosphoserine is present on Ser152. The 243-residue stretch at 159 to 401 (YVLSSRVRTG…NYLIDCERRL (243 aa)) folds into the Phosphagen kinase C-terminal domain. 162-166 (SSRVR) lines the ATP pocket. Ser197 carries the phosphoserine modification. The residue at position 214 (Thr214) is a Phosphothreonine. His225 contacts ATP. Phosphoserine is present on Ser233. Residues Arg270, Arg326, 354–359 (RGTGGV), and Asp369 each bind ATP. A Phosphothreonine modification is found at Thr356.

This sequence belongs to the ATP:guanido phosphotransferase family. In terms of assembly, exists as an octamer composed of four MTCK homodimers. As to expression, in many tissues, with highest levels in brain gut and kidney. In the kidney localized primarily in the outer medulla in the thick ascending limb and distal convoluted tubule.

It is found in the mitochondrion inner membrane. It catalyses the reaction creatine + ATP = N-phosphocreatine + ADP + H(+). Its function is as follows. Reversibly catalyzes the transfer of phosphate between ATP and various phosphogens (e.g. creatine phosphate). Creatine kinase isoenzymes play a central role in energy transduction in tissues with large, fluctuating energy demands, such as skeletal muscle, heart, brain and spermatozoa. This chain is Creatine kinase U-type, mitochondrial (Ckmt1), found in Rattus norvegicus (Rat).